The sequence spans 487 residues: Cobyric acid synthase (487 aa).

A GATase cobBQ-type domain is found at 249 to 435 (GIDIAIVRLP…IHGIFDEGDF (187 aa)). Residue Cys330 is the Nucleophile of the active site. His427 is a catalytic residue.

The protein belongs to the CobB/CobQ family. CobQ subfamily.

The protein operates within cofactor biosynthesis; adenosylcobalamin biosynthesis. In terms of biological role, catalyzes amidations at positions B, D, E, and G on adenosylcobyrinic A,C-diamide. NH(2) groups are provided by glutamine, and one molecule of ATP is hydrogenolyzed for each amidation. The polypeptide is Cobyric acid synthase (Clostridium perfringens (strain SM101 / Type A)).